The chain runs to 61 residues: MKFTATFLVLSLVVLMAEPGECFLGALIKGAIHGGRFIHGMIQNHHGYDEQQELNKRAVDE.

The N-terminal stretch at 1–22 is a signal peptide; it reads MKFTATFLVLSLVVLMAEPGEC. A propeptide spanning residues 48–61 is cleaved from the precursor; the sequence is YDEQQELNKRAVDE.

The protein belongs to the pleurocidin family.

It localises to the secreted. Functionally, antimicrobial peptide. The chain is Pleurocidin-like peptide WF3 (ple3) from Pseudopleuronectes americanus (Winter flounder).